Reading from the N-terminus, the 360-residue chain is Peptide chain release factor 1 (360 aa).

Gln235 is subject to N5-methylglutamine.

The protein belongs to the prokaryotic/mitochondrial release factor family. Methylated by PrmC. Methylation increases the termination efficiency of RF1.

Its subcellular location is the cytoplasm. Its function is as follows. Peptide chain release factor 1 directs the termination of translation in response to the peptide chain termination codons UAG and UAA. This is Peptide chain release factor 1 from Paracidovorax citrulli (strain AAC00-1) (Acidovorax citrulli).